Here is a 164-residue protein sequence, read N- to C-terminus: Transcriptional repressor NrdR (164 aa).

The segment at 3 to 34 (CPKCNYNKSSVVDSRQAEDGNTIRRRRECESC) is a zinc-finger region. Residues 49 to 139 (LLVIKKDGTR…VYKSFKDLDE (91 aa)) form the ATP-cone domain.

Belongs to the NrdR family. Zn(2+) is required as a cofactor.

Negatively regulates transcription of bacterial ribonucleotide reductase nrd genes and operons by binding to NrdR-boxes. This Streptococcus equi subsp. zooepidemicus (strain H70) protein is Transcriptional repressor NrdR.